We begin with the raw amino-acid sequence, 551 residues long: Rqc2 homolog RqcH (551 aa).

The tract at residues 363–551 (YQKLKEAVKY…SKKIASMKKS (189 aa)) is required for fibronectin binding.

It belongs to the NEMF family. In terms of assembly, associates with stalled 50S ribosomal subunits, binds to RqcP. Interacts with human fibronectin.

It localises to the cell surface. The protein resides in the cytoplasm. Its function is as follows. Key component of the ribosome quality control system (RQC), a ribosome-associated complex that mediates the extraction of incompletely synthesized nascent chains from stalled ribosomes and their subsequent degradation. RqcH recruits Ala-charged tRNA, and with RqcP directs the elongation of stalled nascent chains on 50S ribosomal subunits, leading to non-templated C-terminal alanine extensions (Ala tail). The Ala tail promotes nascent chain degradation. May add between 1 and at least 8 Ala residues. Binds to stalled 50S ribosomal subunits. Functionally, recombinant protein binds to immobilized human fibronectin; binding is saturable and competed by heparin. Recombinant protein inhibits binding of whole cells to fibronectin. The sequence is that of Rqc2 homolog RqcH from Streptococcus pneumoniae (strain ATCC BAA-255 / R6).